Reading from the N-terminus, the 298-residue chain is Ribosomal protein L11 methyltransferase (298 aa).

Thr-139, Gly-163, Asp-185, and Asn-232 together coordinate S-adenosyl-L-methionine.

Belongs to the methyltransferase superfamily. PrmA family.

Its subcellular location is the cytoplasm. The catalysed reaction is L-lysyl-[protein] + 3 S-adenosyl-L-methionine = N(6),N(6),N(6)-trimethyl-L-lysyl-[protein] + 3 S-adenosyl-L-homocysteine + 3 H(+). In terms of biological role, methylates ribosomal protein L11. In Gloeothece citriformis (strain PCC 7424) (Cyanothece sp. (strain PCC 7424)), this protein is Ribosomal protein L11 methyltransferase.